The sequence spans 100 residues: Small ribosomal subunit protein uS14c (100 aa).

Belongs to the universal ribosomal protein uS14 family. Part of the 30S ribosomal subunit.

It localises to the plastid. The protein localises to the chloroplast. Its function is as follows. Binds 16S rRNA, required for the assembly of 30S particles. The protein is Small ribosomal subunit protein uS14c of Oenothera argillicola (Appalachian evening primrose).